The sequence spans 308 residues: D-alanine--D-alanine ligase (308 aa).

The region spanning 102–302 (KKVAAAAGVA…FGELLSWMVE (201 aa)) is the ATP-grasp domain. An ATP-binding site is contributed by 128–183 (PMEPPYVVKPVREGSSFGVVIVKEDQTHPPQIISSAEWNYGAEVLVEKYIPGRELT). Mg(2+) is bound by residues Asp-252, Glu-269, and Asn-271.

This sequence belongs to the D-alanine--D-alanine ligase family. Mg(2+) serves as cofactor. Requires Mn(2+) as cofactor.

It is found in the cytoplasm. It carries out the reaction 2 D-alanine + ATP = D-alanyl-D-alanine + ADP + phosphate + H(+). It functions in the pathway cell wall biogenesis; peptidoglycan biosynthesis. Functionally, cell wall formation. The sequence is that of D-alanine--D-alanine ligase from Brucella anthropi (strain ATCC 49188 / DSM 6882 / CCUG 24695 / JCM 21032 / LMG 3331 / NBRC 15819 / NCTC 12168 / Alc 37) (Ochrobactrum anthropi).